Consider the following 507-residue polypeptide: Phospho-2-dehydro-3-deoxyheptonate aldolase 2, chloroplastic (507 aa).

The protein belongs to the class-II DAHP synthase family.

Its subcellular location is the plastid. It is found in the chloroplast. The enzyme catalyses D-erythrose 4-phosphate + phosphoenolpyruvate + H2O = 7-phospho-2-dehydro-3-deoxy-D-arabino-heptonate + phosphate. Its pathway is metabolic intermediate biosynthesis; chorismate biosynthesis; chorismate from D-erythrose 4-phosphate and phosphoenolpyruvate: step 1/7. This is Phospho-2-dehydro-3-deoxyheptonate aldolase 2, chloroplastic (DHS2) from Arabidopsis thaliana (Mouse-ear cress).